We begin with the raw amino-acid sequence, 267 residues long: Undecaprenyl-diphosphatase (267 aa).

The next 8 membrane-spanning stretches (helical) occupy residues 1–21 (MTLF…FLPV), 40–60 (GLAI…LYFW), 83–103 (AFLA…GLII), 111–131 (MMRS…VLYW), 144–164 (GWTL…LIPG), 189–209 (AMLM…ADVI), 219–239 (DGAL…ALMM), and 245–265 (VSFT…LVYA).

The protein belongs to the UppP family.

The protein resides in the cell inner membrane. It catalyses the reaction di-trans,octa-cis-undecaprenyl diphosphate + H2O = di-trans,octa-cis-undecaprenyl phosphate + phosphate + H(+). In terms of biological role, catalyzes the dephosphorylation of undecaprenyl diphosphate (UPP). Confers resistance to bacitracin. The sequence is that of Undecaprenyl-diphosphatase from Roseobacter denitrificans (strain ATCC 33942 / OCh 114) (Erythrobacter sp. (strain OCh 114)).